A 680-amino-acid polypeptide reads, in one-letter code: Zinc finger protein OBI1 (680 aa).

Residues 16 to 87 (VSFEDVAVDF…AEATEQCLPG (72 aa)) form the KRAB domain. The C2H2-type 1; degenerate zinc-finger motif lies at 263–280 (CHKIFPNKTELSNHDAMH). 8 consecutive C2H2-type zinc fingers follow at residues 455-477 (FRCN…QRMH), 483-505 (HECK…QGIH), 511-533 (YECN…ERTH), 539-561 (FECK…QKIH), 567-589 (HKCK…QKTH), 595-617 (YECK…ETTH), 623-645 (YECK…QVIH), and 651-673 (FECK…QKIH).

In terms of processing, polyubiquitinated, leading to its degradation via the ubiquitin-proteasome pathway. As to expression, expressed during osteogenic differentiation where levels increase from the first days of differentiation and remain high during the whole process. Highly expressed in lung.

The protein resides in the nucleus. Functionally, may modulate osteogenic differentiation, at least in part, through the bone morphogenetic protein (BMP) signaling pathway, increasing RUNX2 activation and leading to osteoblast commitment and maturation. This chain is Zinc finger protein OBI1 (ObI1), found in Mus musculus (Mouse).